The primary structure comprises 1402 residues: DNA-directed RNA polymerase subunit beta' (1402 aa).

Residues Cys71, Cys73, Cys86, and Cys89 each coordinate Zn(2+). 3 residues coordinate Mg(2+): Asp462, Asp464, and Asp466. Zn(2+) is bound by residues Cys811, Cys885, Cys892, and Cys895. The disordered stretch occupies residues 1379–1402 (RKGTGAGSANQMLQDMTDQVPAAE). Residues 1385-1395 (GSANQMLQDMT) show a composition bias toward polar residues.

It belongs to the RNA polymerase beta' chain family. The RNAP catalytic core consists of 2 alpha, 1 beta, 1 beta' and 1 omega subunit. When a sigma factor is associated with the core the holoenzyme is formed, which can initiate transcription. Mg(2+) is required as a cofactor. Requires Zn(2+) as cofactor.

It catalyses the reaction RNA(n) + a ribonucleoside 5'-triphosphate = RNA(n+1) + diphosphate. Functionally, DNA-dependent RNA polymerase catalyzes the transcription of DNA into RNA using the four ribonucleoside triphosphates as substrates. The polypeptide is DNA-directed RNA polymerase subunit beta' (Agrobacterium fabrum (strain C58 / ATCC 33970) (Agrobacterium tumefaciens (strain C58))).